Consider the following 513-residue polypeptide: uncharacterized protein (513 aa).

The next 5 helical transmembrane spans lie at 262–282 (FAIF…FWQL), 304–324 (YMFL…ITYH), 341–361 (EPIP…FEAL), 382–402 (LVIG…VIIV), and 429–449 (MFLA…ILVL). The interval 489–513 (PGTYSRGNGQKGAKREDPKDEENNI) is disordered. Residues 501-513 (AKREDPKDEENNI) show a composition bias toward basic and acidic residues.

This sequence belongs to the GerABKA family.

Its subcellular location is the cell membrane. This is an uncharacterized protein from Bacillus subtilis (strain 168).